A 186-amino-acid chain; its full sequence is Glutathione-independent glyoxalase DJR-1.2 (186 aa).

Catalysis depends on residues Glu-20, Cys-105, and His-124.

It belongs to the peptidase C56 family. DJ-1 subfamily. Expressed in various tissues, including pharyngeal muscles, pharynx-intestinal valve, ventral nerve cord, spermatheca, rectal gland, inner labial (IL) cells of head neurons, phasmid (PHA/PHB) neurons in tail and supporting sheath/socket cells, as well as in head mesodermal cells (HMC), excretory canals and coelomocytes.

The protein resides in the cytoplasm. It catalyses the reaction methylglyoxal + H2O = (R)-lactate + H(+). Its function is as follows. Catalyzes the conversion of methylglyoxal (MG) or glyoxal (GO) to D-lactate or glycolic acid respectively in a single glutathione (GSH)-independent step. May play a role in detoxifying endogenously produced glyoxals. Involved in protection against glyoxal-induced cell death. Protects dopaminergic neurons from glyoxal-dependent neuronal degeneration. This Caenorhabditis elegans protein is Glutathione-independent glyoxalase DJR-1.2.